The chain runs to 290 residues: Xyloglucan endotransglucosylase/hydrolase protein 9 (290 aa).

A signal peptide spans 1–26 (MVGMDLFKCVMMIMVLVVSCGEAVSG). The 189-residue stretch at 27-215 (AKFDELYRSS…WSHAPFVASY (189 aa)) folds into the GH16 domain. An N-linked (GlcNAc...) asparagine glycan is attached at Asn-55. The active-site Nucleophile is Glu-101. The active-site Proton donor is Glu-105. Glu-105 is a binding site for xyloglucan. Asn-109 carries N-linked (GlcNAc...) asparagine glycosylation. Residues 118–120 (QTN), 128–130 (NRE), 194–195 (DW), and Gly-199 each bind xyloglucan. Cystine bridges form between Cys-223/Cys-234 and Cys-271/Cys-284. Arg-276 contacts xyloglucan.

It belongs to the glycosyl hydrolase 16 family. XTH group 1 subfamily. Contains at least one intrachain disulfide bond essential for its enzymatic activity. Highly expressed in shoot apices. In the vegetative and reproductive phases, it accumulates in the shoot apex region, where cell division is most active. In the reproductive phase, it is also expressed in flower buds, flower stalks and internodes bearing flowers.

The protein resides in the secreted. Its subcellular location is the cell wall. It localises to the extracellular space. The protein localises to the apoplast. It carries out the reaction breaks a beta-(1-&gt;4) bond in the backbone of a xyloglucan and transfers the xyloglucanyl segment on to O-4 of the non-reducing terminal glucose residue of an acceptor, which can be a xyloglucan or an oligosaccharide of xyloglucan.. Functionally, catalyzes xyloglucan endohydrolysis (XEH) and/or endotransglycosylation (XET). Cleaves and religates xyloglucan polymers, an essential constituent of the primary cell wall, and thereby participates in cell wall construction of growing tissues. Involved in internodal cell elongation. This Arabidopsis thaliana (Mouse-ear cress) protein is Xyloglucan endotransglucosylase/hydrolase protein 9 (XTH9).